The chain runs to 109 residues: A-type ATP synthase subunit F (109 aa).

This sequence belongs to the V-ATPase F subunit family. Has multiple subunits with at least A(3), B(3), C, D, E, F, H, I and proteolipid K(x).

It localises to the cell membrane. Functionally, component of the A-type ATP synthase that produces ATP from ADP in the presence of a proton gradient across the membrane. This is A-type ATP synthase subunit F from Haloquadratum walsbyi (strain DSM 16790 / HBSQ001).